The sequence spans 109 residues: Phosphocarrier protein HPr (109 aa).

The 88-residue stretch at 22–109 (ELSAVFTIRN…EVFNSGFGEL (88 aa)) folds into the HPr domain. Histidine 36 acts as the Pros-phosphohistidine intermediate in catalysis.

It belongs to the HPr family.

The protein localises to the cytoplasm. Functionally, general (non sugar-specific) component of the phosphoenolpyruvate-dependent sugar phosphotransferase system (sugar PTS). This major carbohydrate active-transport system catalyzes the phosphorylation of incoming sugar substrates concomitantly with their translocation across the cell membrane. The phosphoryl group from phosphoenolpyruvate (PEP) is transferred to the phosphoryl carrier protein HPr by enzyme I. Phospho-HPr then transfers it to the PTS EIIA domain. This is Phosphocarrier protein HPr (ptsH) from Chlamydia trachomatis serovar D (strain ATCC VR-885 / DSM 19411 / UW-3/Cx).